The following is a 141-amino-acid chain: Hemoglobin subunit alpha (141 aa).

Residues 1–141 (VLSPADKSNV…VSTVLTSKYR (141 aa)) enclose the Globin domain. The residue at position 3 (Ser-3) is a Phosphoserine. An N6-succinyllysine mark is found at Lys-7 and Lys-11. Position 16 is an N6-acetyllysine; alternate (Lys-16). Position 16 is an N6-succinyllysine; alternate (Lys-16). Tyr-24 bears the Phosphotyrosine mark. Ser-35 bears the Phosphoserine mark. Position 40 is an N6-succinyllysine (Lys-40). Ser-49 carries the post-translational modification Phosphoserine. His-58 contributes to the O2 binding site. His-87 is a binding site for heme b. A Phosphoserine modification is found at Ser-102. At Thr-108 the chain carries Phosphothreonine. Phosphoserine is present on residues Ser-124 and Ser-131. Phosphothreonine is present on residues Thr-134 and Thr-137. The residue at position 138 (Ser-138) is a Phosphoserine.

The protein belongs to the globin family. As to quaternary structure, heterotetramer of two alpha chains and two beta chains. Red blood cells.

In terms of biological role, involved in oxygen transport from the lung to the various peripheral tissues. Hemopressin acts as an antagonist peptide of the cannabinoid receptor CNR1. Hemopressin-binding efficiently blocks cannabinoid receptor CNR1 and subsequent signaling. In Leontocebus fuscicollis (Brown-mantled tamarin), this protein is Hemoglobin subunit alpha (HBA).